We begin with the raw amino-acid sequence, 542 residues long: Chaperonin GroEL 2 (542 aa).

Residues 30–33, lysine 51, 87–91, glycine 415, and aspartate 495 each bind ATP; these read TLGP and DGTTT.

The protein belongs to the chaperonin (HSP60) family. As to quaternary structure, forms a cylinder of 14 subunits composed of two heptameric rings stacked back-to-back. Interacts with the co-chaperonin GroES.

It is found in the cytoplasm. The catalysed reaction is ATP + H2O + a folded polypeptide = ADP + phosphate + an unfolded polypeptide.. Its function is as follows. Together with its co-chaperonin GroES, plays an essential role in assisting protein folding. The GroEL-GroES system forms a nano-cage that allows encapsulation of the non-native substrate proteins and provides a physical environment optimized to promote and accelerate protein folding. The sequence is that of Chaperonin GroEL 2 from Methylococcus capsulatus (strain ATCC 33009 / NCIMB 11132 / Bath).